We begin with the raw amino-acid sequence, 288 residues long: Mycothiol S-conjugate amidase (288 aa).

Residues His-12, Asp-15, and His-142 each contribute to the Zn(2+) site.

It belongs to the MshB deacetylase family. Mca subfamily. As to quaternary structure, monomer. The cofactor is Zn(2+).

The catalysed reaction is mycothiol S-conjugate + H2O = an N-acetyl-L-cysteine-S-conjugate + 1D-myo-inositol 2-amino-2-deoxy-alpha-D-glucopyranoside. With respect to regulation, partially inhibited by MSH when MSmB is used as substrate. Competitively inhibited by the GlcNAc-cyclohexyl derivative 5-(4-chlorophenyl)-N-((2R,3R,4R,5S,6R)-2-(cyclohexylthio)-tetrahydro-4,5-dihydroxy-6-(hydroxymethyl)-2H-pyran-3-yl)furan-2-carboxamide, which also inhibits MshB. Functionally, a mycothiol (MSH, N-acetyl-cysteinyl-glucosaminyl-inositol) S-conjugate amidase, it recycles conjugated MSH to the N-acetyl cysteine conjugate and the MSH precursor. Involved in MSH-dependent detoxification of a number of alkylating agents and antibiotics. Activity is specific for the mycothiol moiety. Has a low but measurable deacetylation activity on GlcNAc-Ins (N-acetyl-glucosaminyl-inositol), and thus can also directly contribute to the production of MSH. The protein is Mycothiol S-conjugate amidase of Mycobacterium tuberculosis (strain ATCC 25618 / H37Rv).